Here is a 133-residue protein sequence, read N- to C-terminus: Large ribosomal subunit protein uL14m (133 aa).

Belongs to the universal ribosomal protein uL14 family. As to quaternary structure, probably part of the large ribosomal subunit.

It localises to the hydrogenosome. This chain is Large ribosomal subunit protein uL14m (rpl14), found in Nyctotherus ovalis.